We begin with the raw amino-acid sequence, 369 residues long: sn-glycerol-3-phosphate import ATP-binding protein UgpC (369 aa).

Positions Leu4–Ile235 constitute an ABC transporter domain. Gly37 to Ser44 contributes to the ATP binding site.

It belongs to the ABC transporter superfamily. sn-glycerol-3-phosphate importer (TC 3.A.1.1.3) family. As to quaternary structure, the complex is composed of two ATP-binding proteins (UgpC), two transmembrane proteins (UgpA and UgpE) and a solute-binding protein (UgpB).

Its subcellular location is the cell inner membrane. The catalysed reaction is sn-glycerol 3-phosphate(out) + ATP + H2O = sn-glycerol 3-phosphate(in) + ADP + phosphate + H(+). In terms of biological role, part of the ABC transporter complex UgpBAEC involved in sn-glycerol-3-phosphate (G3P) import. Responsible for energy coupling to the transport system. The sequence is that of sn-glycerol-3-phosphate import ATP-binding protein UgpC from Cupriavidus pinatubonensis (strain JMP 134 / LMG 1197) (Cupriavidus necator (strain JMP 134)).